We begin with the raw amino-acid sequence, 320 residues long: SUN domain-containing protein 3 (320 aa).

Residues 1-6 (MLTRSW) are Nuclear-facing. A helical transmembrane segment spans residues 7-29 (KIILSTVFISTFLLVGLLNHQWL). Residues 30 to 320 (KETEFPQKPR…RVHGIPSDYT (291 aa)) are Perinuclear space-facing. The stretch at 63–102 (KEQQELLKKESQTLENNFREILFLIEQIDVLKALLKDMKD) forms a coiled coil. One can recognise an SUN domain in the interval 156–317 (GASVIEAGTS…YRFRVHGIPS (162 aa)).

In terms of assembly, self-associates. Interacts with SYNE1 and SPAG4/SUN4. Proposed to form a spermatogenesis-specific LINC complex with SYNE1 during sperm head formation possibly implicating a SUN domain-based heterotrimer with SPAG4/SUN4 associating with SYNE1. Can interact with SYNE3; the interaction is questioned by missing colocalization in spermatids. In terms of tissue distribution, specifically expressed in testis (at protein level).

It localises to the membrane. Its subcellular location is the nucleus envelope. The protein resides in the nucleus inner membrane. Its function is as follows. As a probable component of the LINC (LInker of Nucleoskeleton and Cytoskeleton) complex, involved in the connection between the nuclear lamina and the cytoskeleton. The nucleocytoplasmic interactions established by the LINC complex play an important role in the transmission of mechanical forces across the nuclear envelope and in nuclear movement and positioning. May be involved in nuclear remodeling during sperm head formation in spermatogenesis. A probable SUN3:SYNE1 LINC complex may tether spermatid nuclei to posterior cytoskeletal structures such as the manchette. The polypeptide is SUN domain-containing protein 3 (Sun3) (Mus musculus (Mouse)).